A 152-amino-acid polypeptide reads, in one-letter code: Spermine/spermidine N(1)-acetyltransferase (152 aa).

An N-acetyltransferase domain is found at isoleucine 3–leucine 152. Acetyl-CoA-binding positions include phenylalanine 82–isoleucine 84, glutamine 89–lysine 95, and asparagine 122–arginine 131. Residue tyrosine 129 is the Proton donor of the active site.

The protein belongs to the acetyltransferase family.

It carries out the reaction an alkane-alpha,omega-diamine + acetyl-CoA = an N-acetylalkane-alpha,omega-diamine + CoA + H(+). It catalyses the reaction spermine + acetyl-CoA = N(1)-acetylspermine + CoA + H(+). The enzyme catalyses spermidine + acetyl-CoA = N(1)-acetylspermidine + CoA + H(+). Its pathway is amine and polyamine degradation; spermine degradation. It participates in amine and polyamine degradation; spermidine degradation. With respect to regulation, putrescine and N(8)-acetylspermidine are competitive inhibitors of spermidine acetylation. In terms of biological role, acetylates both spermidine and spermine at primary propyl amine moieties, with spermine being the preferred substrate. This is Spermine/spermidine N(1)-acetyltransferase (bltD) from Bacillus subtilis (strain 168).